Reading from the N-terminus, the 87-residue chain is Large ribosomal subunit protein bL27 (87 aa).

The protein belongs to the bacterial ribosomal protein bL27 family.

This Paenarthrobacter aurescens (strain TC1) protein is Large ribosomal subunit protein bL27.